A 95-amino-acid chain; its full sequence is Co-chaperonin GroES (95 aa).

The protein belongs to the GroES chaperonin family. Heptamer of 7 subunits arranged in a ring. Interacts with the chaperonin GroEL.

Its subcellular location is the cytoplasm. Its function is as follows. Together with the chaperonin GroEL, plays an essential role in assisting protein folding. The GroEL-GroES system forms a nano-cage that allows encapsulation of the non-native substrate proteins and provides a physical environment optimized to promote and accelerate protein folding. GroES binds to the apical surface of the GroEL ring, thereby capping the opening of the GroEL channel. The sequence is that of Co-chaperonin GroES from Oleidesulfovibrio alaskensis (strain ATCC BAA-1058 / DSM 17464 / G20) (Desulfovibrio alaskensis).